The chain runs to 597 residues: Elongation factor 4 (597 aa).

Positions 2–184 constitute a tr-type G domain; sequence DHIRNFSIIA…SLIAKVPPPK (183 aa). GTP-binding positions include 14 to 19 and 131 to 134; these read DHGKST and NKID.

This sequence belongs to the TRAFAC class translation factor GTPase superfamily. Classic translation factor GTPase family. LepA subfamily.

It is found in the cell inner membrane. The enzyme catalyses GTP + H2O = GDP + phosphate + H(+). Its function is as follows. Required for accurate and efficient protein synthesis under certain stress conditions. May act as a fidelity factor of the translation reaction, by catalyzing a one-codon backward translocation of tRNAs on improperly translocated ribosomes. Back-translocation proceeds from a post-translocation (POST) complex to a pre-translocation (PRE) complex, thus giving elongation factor G a second chance to translocate the tRNAs correctly. Binds to ribosomes in a GTP-dependent manner. The chain is Elongation factor 4 from Burkholderia cenocepacia (strain HI2424).